An 806-amino-acid chain; its full sequence is mRNA 3'-end-processing protein RNA14 (806 aa).

Residues Met-1–Arg-187 form a disordered region. 2 stretches are compositionally biased toward basic and acidic residues: residues Ala-33–Glu-43 and Gln-60–Asn-107. The segment covering Pro-108–Tyr-118 has biased composition (acidic residues). The segment covering Ala-132–Ile-142 has biased composition (gly residues). Residues Ser-170–Asp-181 are compositionally biased toward low complexity. HAT repeat units lie at residues Glu-221–Asp-253, Gly-255–Arg-286, Glu-299–Ser-334, Gln-345–Ser-378, and Val-404–Ser-440. Residues Lys-729–Asp-770 are disordered. Residues Ser-732–Ser-744 show a composition bias toward basic and acidic residues.

Its subcellular location is the nucleus. The protein localises to the cytoplasm. Its function is as follows. Component of the cleavage factor IA (CFIA) complex, which is involved in the endonucleolytic cleavage during polyadenylation-dependent pre-mRNA 3'-end formation. The chain is mRNA 3'-end-processing protein RNA14 (RNA14) from Yarrowia lipolytica (strain CLIB 122 / E 150) (Yeast).